The following is a 284-amino-acid chain: 2-dehydro-3-deoxyphosphooctonate aldolase (284 aa).

Belongs to the KdsA family.

It localises to the cytoplasm. It carries out the reaction D-arabinose 5-phosphate + phosphoenolpyruvate + H2O = 3-deoxy-alpha-D-manno-2-octulosonate-8-phosphate + phosphate. It functions in the pathway carbohydrate biosynthesis; 3-deoxy-D-manno-octulosonate biosynthesis; 3-deoxy-D-manno-octulosonate from D-ribulose 5-phosphate: step 2/3. The protein operates within bacterial outer membrane biogenesis; lipopolysaccharide biosynthesis. The chain is 2-dehydro-3-deoxyphosphooctonate aldolase from Methylobacterium radiotolerans (strain ATCC 27329 / DSM 1819 / JCM 2831 / NBRC 15690 / NCIMB 10815 / 0-1).